Consider the following 258-residue polypeptide: Phosphate import ATP-binding protein PstB 1 (258 aa).

One can recognise an ABC transporter domain in the interval 5–247; it reads LDLTDVNIYY…EKIFSNPNQK (243 aa). Position 37–44 (37–44) interacts with ATP; the sequence is GPSGCGKT.

It belongs to the ABC transporter superfamily. Phosphate importer (TC 3.A.1.7) family. The complex is composed of two ATP-binding proteins (PstB), two transmembrane proteins (PstC and PstA) and a solute-binding protein (PstS).

It localises to the cell membrane. It carries out the reaction phosphate(out) + ATP + H2O = ADP + 2 phosphate(in) + H(+). Functionally, part of the ABC transporter complex PstSACB involved in phosphate import. Responsible for energy coupling to the transport system. The polypeptide is Phosphate import ATP-binding protein PstB 1 (Mycobacterium tuberculosis (strain CDC 1551 / Oshkosh)).